We begin with the raw amino-acid sequence, 256 residues long: MIKAVKMNTSFDKEKVRKHLPGAIFLSLVVITSLWLVISTISWMTDEDRLPLSHMIIQGQLKHITADDIREAIDSMDSIGTFMTQDVNKLQDALLSLPWIAQVSVRKQWPETIKVFVVEHQPEATWNNRVIVNPEGVVFNAPMSDLREPKPALFGPETSSKDVLDFWHQLQKQFEPIHVTVHSVALTERLSWQVVLDNGIRLELGRDSREERVERFIALYKQLESKKDSIDYIDLRYDTGAAVGWKSDDVENKEEN.

The Cytoplasmic portion of the chain corresponds to 1-23; sequence MIKAVKMNTSFDKEKVRKHLPGA. The chain crosses the membrane as a helical span at residues 24-44; it reads IFLSLVVITSLWLVISTISWM. Residues 45-256 lie on the Periplasmic side of the membrane; that stretch reads TDEDRLPLSH…SDDVENKEEN (212 aa). A POTRA domain is found at 50–120; sequence LPLSHMIIQG…ETIKVFVVEH (71 aa).

This sequence belongs to the FtsQ/DivIB family. FtsQ subfamily. As to quaternary structure, part of a complex composed of FtsB, FtsL and FtsQ.

Its subcellular location is the cell inner membrane. Its function is as follows. Essential cell division protein. May link together the upstream cell division proteins, which are predominantly cytoplasmic, with the downstream cell division proteins, which are predominantly periplasmic. May control correct divisome assembly. This is Cell division protein FtsQ from Aliivibrio fischeri (strain ATCC 700601 / ES114) (Vibrio fischeri).